The chain runs to 478 residues: Endoglucanase 18 (478 aa).

The N-terminal stretch at Met-1–Ala-21 is a signal peptide. Asn-29 carries N-linked (GlcNAc...) asparagine glycosylation. Asp-76 (nucleophile) is an active-site residue. His-398 is a catalytic residue. The segment at His-433–Thr-452 is disordered. Asn-442 carries an N-linked (GlcNAc...) asparagine glycan. Active-site residues include Asp-449 and Glu-458.

This sequence belongs to the glycosyl hydrolase 9 (cellulase E) family.

It is found in the secreted. The enzyme catalyses Endohydrolysis of (1-&gt;4)-beta-D-glucosidic linkages in cellulose, lichenin and cereal beta-D-glucans.. The protein is Endoglucanase 18 of Arabidopsis thaliana (Mouse-ear cress).